The primary structure comprises 173 residues: Bifunctional protein PyrR (173 aa).

Positions Val-93–Thr-105 match the PRPP-binding motif.

It belongs to the purine/pyrimidine phosphoribosyltransferase family. PyrR subfamily. Homodimer and homohexamer; in equilibrium.

The catalysed reaction is UMP + diphosphate = 5-phospho-alpha-D-ribose 1-diphosphate + uracil. Its function is as follows. Regulates transcriptional attenuation of the pyrimidine nucleotide (pyr) operon by binding in a uridine-dependent manner to specific sites on pyr mRNA. This disrupts an antiterminator hairpin in the RNA and favors formation of a downstream transcription terminator, leading to a reduced expression of downstream genes. Also displays a weak uracil phosphoribosyltransferase activity which is not physiologically significant. This chain is Bifunctional protein PyrR, found in Streptococcus pneumoniae (strain 70585).